A 106-amino-acid polypeptide reads, in one-letter code: Late cornified envelope protein 2A (106 aa).

The span at 1-10 shows a compositional bias: low complexity; the sequence is MSCQQNQQQC. Residues 1-25 form a disordered region; the sequence is MSCQQNQQQCQPPPKCPPKCPPKCP. Positions 11-25 are enriched in pro residues; the sequence is QPPPKCPPKCPPKCP.

The protein belongs to the LCE family. In terms of assembly, interacts with CYSRT1. Skin-specific. Expression was readily detected in adult trunk skin, adult arm skin, fetal skin, penal skin, vulva, esophagus and tongue. Not expressed in the cervix, rectum, lung, colon, or placenta.

Functionally, precursors of the cornified envelope of the stratum corneum. The sequence is that of Late cornified envelope protein 2A (LCE2A) from Homo sapiens (Human).